The chain runs to 151 residues: Large ribosomal subunit protein bL9 (151 aa).

It belongs to the bacterial ribosomal protein bL9 family.

Binds to the 23S rRNA. This is Large ribosomal subunit protein bL9 from Dehalococcoides mccartyi (strain ATCC BAA-2266 / KCTC 15142 / 195) (Dehalococcoides ethenogenes (strain 195)).